The sequence spans 415 residues: Small RNA 2'-O-methyltransferase (415 aa).

Positions 99 and 117 each coordinate S-adenosyl-L-methionine. Positions 169, 172, and 173 each coordinate Mg(2+).

It belongs to the methyltransferase superfamily. HEN1 family. The cofactor is Mg(2+).

The protein resides in the cytoplasm. It catalyses the reaction small RNA 3'-end nucleotide + S-adenosyl-L-methionine = small RNA 3'-end 2'-O-methylnucleotide + S-adenosyl-L-homocysteine + H(+). Its function is as follows. Methyltransferase that adds a 2'-O-methyl group at the 3'-end of piRNAs, a class of 24 to 30 nucleotide RNAs that are generated by a Dicer-independent mechanism and are primarily derived from transposons and other repeated sequence elements. This probably protects the 3'-end of piRNAs from uridylation activity and subsequent degradation. Stabilization of piRNAs is essential for gametogenesis. The chain is Small RNA 2'-O-methyltransferase from Bombyx mori (Silk moth).